We begin with the raw amino-acid sequence, 437 residues long: 3-ketoacyl-CoA thiolase (437 aa).

Residue cysteine 99 is the Acyl-thioester intermediate of the active site. Residues histidine 392 and cysteine 422 each act as proton acceptor in the active site.

This sequence belongs to the thiolase-like superfamily. Thiolase family. Heterotetramer of two alpha chains (FadJ) and two beta chains (FadI).

The protein resides in the cytoplasm. It catalyses the reaction an acyl-CoA + acetyl-CoA = a 3-oxoacyl-CoA + CoA. It participates in lipid metabolism; fatty acid beta-oxidation. Its function is as follows. Catalyzes the final step of fatty acid oxidation in which acetyl-CoA is released and the CoA ester of a fatty acid two carbons shorter is formed. This is 3-ketoacyl-CoA thiolase from Pectobacterium atrosepticum (strain SCRI 1043 / ATCC BAA-672) (Erwinia carotovora subsp. atroseptica).